Reading from the N-terminus, the 177-residue chain is MTFKGTTIVAVKRDGAVALAGDGQVGLGNGIIVKRDAVKLRRLYKDRVVAGFAGSVADAFALFERFEGKLEESQGNLRRAAVQLAKDWRTDKYLRRLEALLVVADREAVLLISGGGEVIEPDDGIIAVGSGGAFALAAARALARHTALPAVDIAREALQIASQICVHTNDRITVEQV.

Thr6 is a catalytic residue. Residues Ser162, Cys165, and Thr168 each contribute to the Na(+) site.

The protein belongs to the peptidase T1B family. HslV subfamily. As to quaternary structure, a double ring-shaped homohexamer of HslV is capped on each side by a ring-shaped HslU homohexamer. The assembly of the HslU/HslV complex is dependent on binding of ATP.

Its subcellular location is the cytoplasm. It carries out the reaction ATP-dependent cleavage of peptide bonds with broad specificity.. With respect to regulation, allosterically activated by HslU binding. Its function is as follows. Protease subunit of a proteasome-like degradation complex believed to be a general protein degrading machinery. The polypeptide is ATP-dependent protease subunit HslV (Desulforudis audaxviator (strain MP104C)).